The chain runs to 281 residues: Large ribosomal subunit protein uL2 (281 aa).

The segment at Leu-215 to Lys-281 is disordered. Residues Lys-258–Ile-269 show a composition bias toward basic and acidic residues. A compositionally biased stretch (basic residues) spans Val-270–Lys-281.

Belongs to the universal ribosomal protein uL2 family. Part of the 50S ribosomal subunit. Forms a bridge to the 30S subunit in the 70S ribosome.

One of the primary rRNA binding proteins. Required for association of the 30S and 50S subunits to form the 70S ribosome, for tRNA binding and peptide bond formation. It has been suggested to have peptidyltransferase activity; this is somewhat controversial. Makes several contacts with the 16S rRNA in the 70S ribosome. In Pelagibacter ubique (strain HTCC1062), this protein is Large ribosomal subunit protein uL2.